A 305-amino-acid chain; its full sequence is rRNA 2'-O-methyltransferase fibrillarin (305 aa).

Residues 1–70 are disordered; that stretch reads MAYTPGSRGG…SGGRGGAKGG (70 aa). The span at 7–69 shows a compositional bias: gly residues; that stretch reads SRGGRGGSRG…SSGGRGGAKG (63 aa). Phosphoserine is present on residues S111 and S114. Residues 160 to 161, 179 to 180, 204 to 205, and 224 to 227 contribute to the S-adenosyl-L-methionine site; these read TS, EF, DA, and DVAQ.

The protein belongs to the methyltransferase superfamily. Fibrillarin family. Component of box C/D small nucleolar ribonucleoprotein (snoRNP) particles. In terms of processing, by homology to other fibrillarins, some or all of the N-terminal domain arginines are modified to asymmetric dimethylarginine (DMA).

The protein localises to the nucleus. It is found in the nucleolus. It carries out the reaction L-glutaminyl-[histone H2A] + S-adenosyl-L-methionine = N(5)-methyl-L-glutaminyl-[histone H2A] + S-adenosyl-L-homocysteine + H(+). S-adenosyl-L-methionine-dependent methyltransferase that has the ability to methylate both RNAs and proteins. Involved in pre-rRNA processing by catalyzing the site-specific 2'-hydroxyl methylation of ribose moieties in pre-ribosomal RNA. Site specificity is provided by a guide RNA that base pairs with the substrate. Methylation occurs at a characteristic distance from the sequence involved in base pairing with the guide RNA. Also acts as a protein methyltransferase by mediating methylation of 'Gln-105' of histone H2A (H2AQ105me), a modification that impairs binding of the FACT complex and is specifically present at 35S ribosomal DNA locus. This Schizosaccharomyces pombe (strain 972 / ATCC 24843) (Fission yeast) protein is rRNA 2'-O-methyltransferase fibrillarin (fib1).